The following is a 346-amino-acid chain: CLOCK-interacting pacemaker (346 aa).

Residues 1 to 42 are compositionally biased toward basic and acidic residues; it reads MEKNQKCATEQERFKARSGHGDGQRAEPRKTQTTTESDKDSG. 2 disordered regions span residues 1–83 and 167–228; these read MEKN…SQPQ and CARK…KELD. A compositionally biased stretch (polar residues) spans 50–68; it reads CLSSVEQTDTEEGPTTSRW. Basic residues predominate over residues 179-192; sequence NQTKRQCSKGHSGS. Residues 205–222 are compositionally biased toward polar residues; that stretch reads GVQQGPVDQNVKESSVSA. The stretch at 283–315 forms a coiled coil; the sequence is MKTKELARHNQATQSQLEKLQEQVQLYATAMSS.

The protein localises to the nucleus. Its subcellular location is the cytoplasm. It is found in the cytosol. In terms of biological role, transcriptional repressor which acts as a negative-feedback regulator of CLOCK-BMAL1 transcriptional activity in the circadian-clock mechanism. The physiological relevance of these observations is unsure. The polypeptide is CLOCK-interacting pacemaker (cipc) (Xenopus laevis (African clawed frog)).